The chain runs to 693 residues: Polyribonucleotide nucleotidyltransferase (693 aa).

Mg(2+) is bound by residues Asp-489 and Asp-495. One can recognise a KH domain in the interval 556–615; the sequence is PQIHVMNINPAKIKDVVGRGGATVKGIVEKTGAQIDTSDSGEVKVFAKDKKSMDMAVAMI. Residues 625 to 693 enclose the S1 motif domain; it reads GQVYKGKIVK…GRVKLSLVAR (69 aa).

Belongs to the polyribonucleotide nucleotidyltransferase family. In terms of assembly, component of the RNA degradosome, which is a multiprotein complex involved in RNA processing and mRNA degradation. Requires Mg(2+) as cofactor.

It localises to the cytoplasm. The enzyme catalyses RNA(n+1) + phosphate = RNA(n) + a ribonucleoside 5'-diphosphate. Involved in mRNA degradation. Catalyzes the phosphorolysis of single-stranded polyribonucleotides processively in the 3'- to 5'-direction. The polypeptide is Polyribonucleotide nucleotidyltransferase (Francisella tularensis subsp. holarctica (strain FTNF002-00 / FTA)).